The chain runs to 405 residues: Enoyl-[acyl-carrier-protein] reductase [NADH] (405 aa).

Residues 48–53, 74–75, 111–112, and 140–141 each bind NAD(+); these read GASSGY, FE, DA, and LA. Tyr-226 contacts substrate. The Proton donor role is filled by Tyr-236. NAD(+) is bound by residues Lys-245 and 274–276; that span reads VVT.

The protein belongs to the TER reductase family. In terms of assembly, monomer.

The enzyme catalyses a 2,3-saturated acyl-[ACP] + NAD(+) = a (2E)-enoyl-[ACP] + NADH + H(+). The protein operates within lipid metabolism; fatty acid biosynthesis. Its function is as follows. Involved in the final reduction of the elongation cycle of fatty acid synthesis (FAS II). Catalyzes the reduction of a carbon-carbon double bond in an enoyl moiety that is covalently linked to an acyl carrier protein (ACP). In Xanthomonas oryzae pv. oryzae (strain PXO99A), this protein is Enoyl-[acyl-carrier-protein] reductase [NADH].